The following is a 20-amino-acid chain: Cathepsin L1 (20 aa).

Residues Ala-1–Glu-10 are compositionally biased toward basic and acidic residues. The segment at Ala-1 to Gln-20 is disordered.

Belongs to the peptidase C1 family. In terms of assembly, dimer of a heavy and a light chain linked by disulfide bonds.

Its subcellular location is the lysosome. It catalyses the reaction Specificity close to that of papain. As compared to cathepsin B, cathepsin L exhibits higher activity toward protein substrates, but has little activity on Z-Arg-Arg-NHMec, and no peptidyl-dipeptidase activity.. Functionally, thiol protease that assists the parasite in burrowing through the gut wall and liver of its mammalian host. The chain is Cathepsin L1 from Fasciola hepatica (Liver fluke).